The primary structure comprises 375 residues: Actin-binding Rho-activating protein (375 aa).

Composition is skewed to basic and acidic residues over residues 1 to 11 and 79 to 99; these read MAPGEREREAG and KPDRDGEGQHSEEATEVSHIK. Disordered regions lie at residues 1–20 and 38–99; these read MAPGEREREAGPAKSALRKV and NENS…SHIK. Phosphoserine occurs at positions 150 and 182. Residues 173–182 are compositionally biased toward basic and acidic residues; the sequence is QEEPTWKSDS. A disordered region spans residues 173 to 204; sequence QEEPTWKSDSVDTEDSGYGGDMEERPEQDAAP. Actin-binding regions lie at residues 193-293 and 294-375; these read DMEE…AERA and KRAE…TLLE. Interaction with actin regions lie at residues 234–279 and 346–375; these read SQVD…GDEG and MRARKHGLVHFEGEMLWQGRDDHVVITLLE.

In terms of assembly, binds F-actin and ABLIM1, ABLIM2 and ABLIM3. Interaction with ABLIM2 and ABLIM3 enhances activity. As to expression, expressed specifically in heart and skeletal muscle.

Its subcellular location is the cytoplasm. It localises to the myofibril. The protein localises to the sarcomere. It is found in the cytoskeleton. Acts as an activator of serum response factor (SRF)-dependent transcription possibly by inducing nuclear translocation of MKL1 or MKL2 and through a mechanism requiring Rho-actin signaling. This is Actin-binding Rho-activating protein from Mus musculus (Mouse).